Reading from the N-terminus, the 382-residue chain is PqqA peptide cyclase (382 aa).

Residues 8–223 (VKPPLWLLAE…VHRYREKMAA (216 aa)) enclose the Radical SAM core domain. Residues cysteine 22, cysteine 26, and cysteine 29 each contribute to the [4Fe-4S] cluster site.

The protein belongs to the radical SAM superfamily. PqqE family. As to quaternary structure, interacts with PqqD. The interaction is necessary for activity of PqqE. Requires [4Fe-4S] cluster as cofactor.

The catalysed reaction is [PQQ precursor protein] + S-adenosyl-L-methionine = E-Y cross-linked-[PQQ precursor protein] + 5'-deoxyadenosine + L-methionine + H(+). Its pathway is cofactor biosynthesis; pyrroloquinoline quinone biosynthesis. Functionally, catalyzes the cross-linking of a glutamate residue and a tyrosine residue in the PqqA protein as part of the biosynthesis of pyrroloquinoline quinone (PQQ). In Erwinia tasmaniensis (strain DSM 17950 / CFBP 7177 / CIP 109463 / NCPPB 4357 / Et1/99), this protein is PqqA peptide cyclase.